We begin with the raw amino-acid sequence, 74 residues long: uncharacterized protein (74 aa).

Residues 55-74 are disordered; that stretch reads DENSESESKDGASWFKVYRG.

This is an uncharacterized protein from Listeria innocua serovar 6a (strain ATCC BAA-680 / CLIP 11262).